A 159-amino-acid polypeptide reads, in one-letter code: MGSEEEKVVVPRNFRLLEELERGEKGIGDGTVSYGMDDADDILMQSWTGTILGPHNTAYEGKIFQLKLFCGKDYPESPPTVRFQSRINMACVNPENGVVDPSHFPMLSNWRREFTMEDLLIQLKKEMMSSQNRKLAQPLEGNEEGRTDPKGLVVKCCVM.

Residues 11 to 159 (PRNFRLLEEL…KGLVVKCCVM (149 aa)) enclose the UBC core domain.

This sequence belongs to the ubiquitin-conjugating enzyme family. Heterodimer with UBC35 or UBC36. In terms of tissue distribution, expressed in roots, shoots, leaves, stems and flowers, but not in pollen.

Functionally, has no ubiquitin ligase activity on its own. The heterodimer with UBC catalyzes the synthesis of non-canonical poly-ubiquitin chains that are linked through 'Lys-63'. This type of poly-ubiquitination does not lead to protein degradation by the proteasome. Mediates transcriptional activation of target genes. May play a role in the control of progress through the cell cycle and differentiation. May play a role in the error-free DNA repair pathway and contributes to the survival of cells after DNA damage. This Arabidopsis thaliana (Mouse-ear cress) protein is Ubiquitin-conjugating enzyme E2 variant 1B (UEV1B).